The primary structure comprises 704 residues: Polyribonucleotide nucleotidyltransferase (704 aa).

The Mg(2+) site is built by Asp486 and Asp492. The KH domain occupies 553–612 (PRIYTMKINPEKIKDVIGKGGSVIRALTDETGTTIEIEDDGTIKIAATDGDKAKHAIRRI). The S1 motif domain maps to 622-690 (GRIYAGKVTR…RQGRIRLSIK (69 aa)).

This sequence belongs to the polyribonucleotide nucleotidyltransferase family. Component of the RNA degradosome, which is a multiprotein complex involved in RNA processing and mRNA degradation. It depends on Mg(2+) as a cofactor.

The protein resides in the cytoplasm. The catalysed reaction is RNA(n+1) + phosphate = RNA(n) + a ribonucleoside 5'-diphosphate. Its function is as follows. Involved in mRNA degradation. Catalyzes the phosphorolysis of single-stranded polyribonucleotides processively in the 3'- to 5'-direction. This chain is Polyribonucleotide nucleotidyltransferase, found in Yersinia pseudotuberculosis serotype IB (strain PB1/+).